The chain runs to 155 residues: Regulatory protein RecX (155 aa).

This sequence belongs to the RecX family.

The protein localises to the cytoplasm. In terms of biological role, modulates RecA activity. This Pseudomonas fluorescens (strain ATCC BAA-477 / NRRL B-23932 / Pf-5) protein is Regulatory protein RecX.